A 79-amino-acid polypeptide reads, in one-letter code: Acyl carrier protein (79 aa).

The Carrier domain occupies 2–77; sequence STIEERVKKI…QAIDYVKVHV (76 aa). Residue serine 37 is modified to O-(pantetheine 4'-phosphoryl)serine.

It belongs to the acyl carrier protein (ACP) family. In terms of processing, 4'-phosphopantetheine is transferred from CoA to a specific serine of apo-ACP by AcpS. This modification is essential for activity because fatty acids are bound in thioester linkage to the sulfhydryl of the prosthetic group.

It localises to the cytoplasm. It functions in the pathway lipid metabolism; fatty acid biosynthesis. Carrier of the growing fatty acid chain in fatty acid biosynthesis. In Xanthomonas albilineans, this protein is Acyl carrier protein.